We begin with the raw amino-acid sequence, 331 residues long: Cytosolic Fe-S cluster assembly factor CFD1 (331 aa).

Position 25–32 (25–32 (GKGGVGKS)) interacts with ATP. Residues cysteine 211 and cysteine 214 each contribute to the [4Fe-4S] cluster site.

The protein belongs to the Mrp/NBP35 ATP-binding proteins family. NUBP2/CFD1 subfamily. In terms of assembly, heterotetramer of 2 NBP35 and 2 CFD1 chains. Requires [4Fe-4S] cluster as cofactor.

It is found in the cytoplasm. Component of the cytosolic iron-sulfur (Fe/S) protein assembly (CIA) machinery. Required for maturation of extramitochondrial Fe-S proteins. The NBP35-CFD1 heterotetramer forms a Fe-S scaffold complex, mediating the de novo assembly of an Fe-S cluster and its transfer to target apoproteins. The protein is Cytosolic Fe-S cluster assembly factor CFD1 of Cryptococcus neoformans var. neoformans serotype D (strain B-3501A) (Filobasidiella neoformans).